Here is a 79-residue protein sequence, read N- to C-terminus: Translational regulator CsrA (79 aa).

Belongs to the CsrA/RsmA family. In terms of assembly, homodimer; the beta-strands of each monomer intercalate to form a hydrophobic core, while the alpha-helices form wings that extend away from the core.

It localises to the cytoplasm. A translational regulator that binds mRNA to regulate translation initiation and/or mRNA stability. Usually binds in the 5'-UTR at or near the Shine-Dalgarno sequence preventing ribosome-binding, thus repressing translation. Its main target seems to be the major flagellin gene, while its function is anatagonized by FliW. In Leptospira biflexa serovar Patoc (strain Patoc 1 / Ames), this protein is Translational regulator CsrA.